The sequence spans 192 residues: dITP/XTP pyrophosphatase (192 aa).

12 to 17 (TNNENK) contacts substrate. The Mg(2+) site is built by E41 and D70. Residue D70 is the Proton acceptor of the active site. Residues S71, 145–148 (FGFD), K168, and 173–174 (HR) each bind substrate.

Belongs to the HAM1 NTPase family. As to quaternary structure, homodimer. Mg(2+) serves as cofactor.

The catalysed reaction is XTP + H2O = XMP + diphosphate + H(+). It carries out the reaction dITP + H2O = dIMP + diphosphate + H(+). The enzyme catalyses ITP + H2O = IMP + diphosphate + H(+). Functionally, pyrophosphatase that catalyzes the hydrolysis of nucleoside triphosphates to their monophosphate derivatives, with a high preference for the non-canonical purine nucleotides XTP (xanthosine triphosphate), dITP (deoxyinosine triphosphate) and ITP. Seems to function as a house-cleaning enzyme that removes non-canonical purine nucleotides from the nucleotide pool, thus preventing their incorporation into DNA/RNA and avoiding chromosomal lesions. The polypeptide is dITP/XTP pyrophosphatase (Saccharolobus solfataricus (strain ATCC 35092 / DSM 1617 / JCM 11322 / P2) (Sulfolobus solfataricus)).